Reading from the N-terminus, the 360-residue chain is DNA replication and repair protein RecF (360 aa).

30–37 contributes to the ATP binding site; that stretch reads GHNGSGKT.

Belongs to the RecF family.

It is found in the cytoplasm. The RecF protein is involved in DNA metabolism; it is required for DNA replication and normal SOS inducibility. RecF binds preferentially to single-stranded, linear DNA. It also seems to bind ATP. This is DNA replication and repair protein RecF from Shewanella amazonensis (strain ATCC BAA-1098 / SB2B).